A 238-amino-acid chain; its full sequence is DNA damage-regulated autophagy modulator protein 1 (238 aa).

6 consecutive transmembrane segments (helical) span residues A9–V29, S53–T73, V91–A111, L116–Y136, M161–I181, and V200–I220.

It belongs to the DRAM/TMEM150 family.

It is found in the lysosome membrane. In terms of biological role, lysosomal modulator of autophagy that plays a central role in p53/TP53-mediated apoptosis. Not involved in p73/TP73-mediated autophagy. This Mus musculus (Mouse) protein is DNA damage-regulated autophagy modulator protein 1 (Dram1).